The primary structure comprises 186 residues: Calcium-binding protein NCSA (186 aa).

EF-hand domains follow at residues 40 to 58 (SGTI…MGVG), 66 to 93 (LFNV…ITRG), 94 to 129 (TPEE…MYKL), and 142 to 177 (DPHD…NPDI). Residues D107, D109, N111, Y113, E118, D155, D157, D159, Y161, and E166 each contribute to the Ca(2+) site.

This sequence belongs to the recoverin family.

In terms of biological role, may prevent cells from entering development prematurely in the presence of environmental nutrients. The chain is Calcium-binding protein NCSA (ncsA) from Dictyostelium discoideum (Social amoeba).